The chain runs to 233 residues: RNA-free ribonuclease P (233 aa).

This sequence belongs to the HARP family.

The enzyme catalyses Endonucleolytic cleavage of RNA, removing 5'-extranucleotides from tRNA precursor.. RNA-free RNase P that catalyzes the removal of the 5'-leader sequence from pre-tRNA to produce the mature 5'-terminus. The protein is RNA-free ribonuclease P of Methanocaldococcus jannaschii (strain ATCC 43067 / DSM 2661 / JAL-1 / JCM 10045 / NBRC 100440) (Methanococcus jannaschii).